The following is a 327-amino-acid chain: Malate dehydrogenase (327 aa).

Residues 20-25 (GAGRVG) and Asp44 each bind NAD(+). Substrate contacts are provided by Arg93 and Arg99. Residues Asn106 and 129–131 (VTN) each bind NAD(+). Positions 131 and 162 each coordinate substrate. The active-site Proton acceptor is the His186.

Belongs to the LDH/MDH superfamily. MDH type 3 family.

The enzyme catalyses (S)-malate + NAD(+) = oxaloacetate + NADH + H(+). Catalyzes the reversible oxidation of malate to oxaloacetate. This chain is Malate dehydrogenase, found in Nostoc punctiforme (strain ATCC 29133 / PCC 73102).